The chain runs to 400 residues: Enoyl-[acyl-carrier-protein] reductase [NADH] 1 (400 aa).

NAD(+)-binding positions include 48–53 (GASSGY), 74–75 (FE), 111–112 (DA), and 139–140 (LA). Position 225 (tyrosine 225) interacts with substrate. Catalysis depends on tyrosine 235, which acts as the Proton donor. NAD(+)-binding positions include lysine 244 and 273 to 275 (VVT).

The protein belongs to the TER reductase family. In terms of assembly, monomer.

It carries out the reaction a 2,3-saturated acyl-[ACP] + NAD(+) = a (2E)-enoyl-[ACP] + NADH + H(+). Its pathway is lipid metabolism; fatty acid biosynthesis. Its function is as follows. Involved in the final reduction of the elongation cycle of fatty acid synthesis (FAS II). Catalyzes the reduction of a carbon-carbon double bond in an enoyl moiety that is covalently linked to an acyl carrier protein (ACP). The polypeptide is Enoyl-[acyl-carrier-protein] reductase [NADH] 1 (Vibrio parahaemolyticus serotype O3:K6 (strain RIMD 2210633)).